A 177-amino-acid polypeptide reads, in one-letter code: Chorismate pyruvate-lyase (177 aa).

Residues Met-36, Arg-78, Leu-116, and Glu-157 each coordinate substrate.

It belongs to the UbiC family. In terms of assembly, monomer.

The protein localises to the cytoplasm. It carries out the reaction chorismate = 4-hydroxybenzoate + pyruvate. The protein operates within cofactor biosynthesis; ubiquinone biosynthesis. Its function is as follows. Removes the pyruvyl group from chorismate, with concomitant aromatization of the ring, to provide 4-hydroxybenzoate (4HB) for the ubiquinone pathway. This Pectobacterium carotovorum subsp. carotovorum (strain PC1) protein is Chorismate pyruvate-lyase.